A 133-amino-acid chain; its full sequence is Ribosome-binding factor A (133 aa).

This sequence belongs to the RbfA family. Monomer. Binds 30S ribosomal subunits, but not 50S ribosomal subunits or 70S ribosomes.

Its subcellular location is the cytoplasm. In terms of biological role, one of several proteins that assist in the late maturation steps of the functional core of the 30S ribosomal subunit. Associates with free 30S ribosomal subunits (but not with 30S subunits that are part of 70S ribosomes or polysomes). Required for efficient processing of 16S rRNA. May interact with the 5'-terminal helix region of 16S rRNA. In Salmonella heidelberg (strain SL476), this protein is Ribosome-binding factor A.